Consider the following 146-residue polypeptide: MRLLQLLFRASPATLLLVLCLQLGANKAQDNTRKIIIKNFDIPKSVRPNDEVTAVLAVQTELKECMVVKTYLISSVPLQGAFNYKYTACLCDDNPKTFYWDFYANRTVQIAAVIDVIQELGICPDDAAVIPIKNNRFYTTEILEVE.

The N-terminal stretch at 1–28 (MRLLQLLFRASPATLLLVLCLQLGANKA) is a signal peptide. Pyrrolidone carboxylic acid is present on Q29. 2 disulfide bridges follow: C65/C91 and C89/C123. A glycan (N-linked (GlcNAc...) asparagine) is linked at N105.

The protein belongs to the PIP family. As to quaternary structure, monomer. Interacts with AZGP1.

The protein localises to the secreted. In Gorilla gorilla gorilla (Western lowland gorilla), this protein is Prolactin-inducible protein homolog (PIP).